The primary structure comprises 254 residues: Adenosylcobinamide-GDP ribazoletransferase (254 aa).

The next 6 helical transmembrane spans lie at 28-48, 62-81, 109-129, 138-158, 179-199, and 200-220; these read FRQTPVAFTVIGYPLGTIVAL, IGVYLLILIGVTGITHIDGI, VGVGGALAVTVTVVSLALGVL, VTFILVLTAEVGAKSAMALLV, LSLFPVILALTPLLLAIPYLG, and ASPTAAVVLTPLIVALVIKQW.

Belongs to the CobS family. Mg(2+) serves as cofactor.

The protein localises to the cell membrane. The enzyme catalyses alpha-ribazole + adenosylcob(III)inamide-GDP = adenosylcob(III)alamin + GMP + H(+). It catalyses the reaction alpha-ribazole 5'-phosphate + adenosylcob(III)inamide-GDP = adenosylcob(III)alamin 5'-phosphate + GMP + H(+). It participates in cofactor biosynthesis; adenosylcobalamin biosynthesis; adenosylcobalamin from cob(II)yrinate a,c-diamide: step 7/7. Functionally, joins adenosylcobinamide-GDP and alpha-ribazole to generate adenosylcobalamin (Ado-cobalamin). Also synthesizes adenosylcobalamin 5'-phosphate from adenosylcobinamide-GDP and alpha-ribazole 5'-phosphate. The chain is Adenosylcobinamide-GDP ribazoletransferase from Haloquadratum walsbyi (strain DSM 16790 / HBSQ001).